Here is a 961-residue protein sequence, read N- to C-terminus: SH3 domain-binding protein 4 (961 aa).

The SH3 1 domain maps to 55–114 (GNAKEVIAIKDYCPNNFTTLKFSKGDHLYVLDTSGGEWWYAHNTTEMGYIPSSYVQPLNY). 5 positions are modified to phosphoserine: Ser-131, Ser-244, Ser-249, Ser-277, and Ser-294. In terms of domain architecture, ZU5 spans 315–452 (TNIVCKLDSS…LEPCMYLAIV (138 aa)). A Phosphoserine modification is found at Ser-635. The SH3 2 domain occupies 652–722 (SSLKFGKLLK…HTKNVLVVGK (71 aa)).

As to quaternary structure, homodimer or homooligomer. Interacts with DNM2, EPS15, clathrin, the adapter protein complex 2/AP-2 and TFRC. Interacts with the Rag GTPases RRAGA, RRAGB, RRAGC and RRAGD; the interaction is most probably direct, preferentially occurs with their inactive GDP-bound form and is negatively regulated by amino acids. Phosphorylated upon EGF stimulation. Phosphorylation prevents interaction with DNM2.

The protein resides in the membrane. It is found in the clathrin-coated pit. The protein localises to the cytoplasmic vesicle. Its subcellular location is the clathrin-coated vesicle. It localises to the nucleus. Functionally, may function in transferrin receptor internalization at the plasma membrane through a cargo-specific control of clathrin-mediated endocytosis. Alternatively, may act as a negative regulator of the amino acid-induced TOR signaling by inhibiting the formation of active Rag GTPase complexes. Preferentially binds inactive Rag GTPase complexes and prevents their interaction with the mTORC1 complex inhibiting its relocalization to lysosomes and its activation. Thereby, may indirectly regulate cell growth, proliferation and autophagy. This is SH3 domain-binding protein 4 (Sh3bp4) from Rattus norvegicus (Rat).